The sequence spans 245 residues: uncharacterized protein (245 aa).

The signal sequence occupies residues 1 to 20; the sequence is MIKQTIVALLLSVGASSVFA.

The protein to E.coli YmcB.

This is an uncharacterized protein from Escherichia coli (strain K12).